Reading from the N-terminus, the 474-residue chain is Glycogen synthase (474 aa).

Lys-15 contributes to the ADP-alpha-D-glucose binding site.

The protein belongs to the glycosyltransferase 1 family. Bacterial/plant glycogen synthase subfamily.

It catalyses the reaction [(1-&gt;4)-alpha-D-glucosyl](n) + ADP-alpha-D-glucose = [(1-&gt;4)-alpha-D-glucosyl](n+1) + ADP + H(+). The protein operates within glycan biosynthesis; glycogen biosynthesis. Its function is as follows. Synthesizes alpha-1,4-glucan chains using ADP-glucose. This Chlamydia trachomatis serovar A (strain ATCC VR-571B / DSM 19440 / HAR-13) protein is Glycogen synthase.